Here is a 360-residue protein sequence, read N- to C-terminus: MKSQTSGYVDPQTEEYDESREKSYQVLIAVSGVLSITSLLILVLFVPSMYNYVDNISRFSRRDFEFCQASANDLETEMMSVREGLLRGRNVTKRAAGYGHYNPSMLAADSPQFQECPACCIPGERGPSGDSGLPALPGAPGPDGAPGRPGTTPNASCIPERVFEPPPCLPCPQGPRGVPGHPGFPGDPGEYGIGGRPGSDGMPGKPGDPGLAGPIGPPGESGPIGDKGRTPEAHVIPGPPGDSGLPGPWGPPGSAGMPGEDGYAGTPGEKGWPGPPGAPGPGGMPGPNGPTGEQGPSGTPGTCVCQDTEVVMNDEKGRVPAPRDNVAPGATGGSYEPQGGNDAAAPSAISQSQNRRIRKW.

3 triple-helical region regions span residues 123–152 (GERGPSGDSGLPALPGAPGPDGAPGRPGTT), 174–230 (GPRG…KGRT), and 238–303 (GPPG…PGTC). Disordered regions lie at residues 127-158 (PSGDSGLPALPGAPGPDGAPGRPGTTPNASCI) and 174-360 (GPRG…IRKW). Residues 189–198 (GEYGIGGRPG) show a composition bias toward gly residues. The segment covering 242 to 258 (DSGLPGPWGPPGSAGMP) has biased composition (low complexity). The segment covering 273–288 (PGPPGAPGPGGMPGPN) has biased composition (pro residues).

The protein belongs to the cuticular collagen family. In terms of assembly, collagen polypeptide chains are complexed within the cuticle by disulfide bonds and other types of covalent cross-links.

Functionally, nematode cuticles are composed largely of collagen-like proteins. The cuticle functions both as an exoskeleton and as a barrier to protect the worm from its environment. Mutations in dpy-2 affects the body shape. The polypeptide is Cuticle collagen dpy-2 (dpy-2) (Caenorhabditis elegans).